Reading from the N-terminus, the 356-residue chain is DNA polymerase IV (356 aa).

The UmuC domain maps to 6-187; it reads IIHIDMDYFF…LDIGDFPGVG (182 aa). Residues D10 and D105 each coordinate Mg(2+). Residue E106 is part of the active site.

The protein belongs to the DNA polymerase type-Y family. In terms of assembly, monomer. The cofactor is Mg(2+).

The protein localises to the cytoplasm. It catalyses the reaction DNA(n) + a 2'-deoxyribonucleoside 5'-triphosphate = DNA(n+1) + diphosphate. Functionally, poorly processive, error-prone DNA polymerase involved in untargeted mutagenesis. Copies undamaged DNA at stalled replication forks, which arise in vivo from mismatched or misaligned primer ends. These misaligned primers can be extended by PolIV. Exhibits no 3'-5' exonuclease (proofreading) activity. May be involved in translesional synthesis, in conjunction with the beta clamp from PolIII. The polypeptide is DNA polymerase IV (Staphylococcus epidermidis (strain ATCC 12228 / FDA PCI 1200)).